The following is a 404-amino-acid chain: 2,3-bisphosphoglycerate-independent phosphoglycerate mutase (404 aa).

A disordered region spans residues 155-183 (LSDMIGDSDPHREGLPPEKIRPTDPSGDR). Residues 162 to 183 (SDPHREGLPPEKIRPTDPSGDR) show a composition bias toward basic and acidic residues.

The protein belongs to the BPG-independent phosphoglycerate mutase family. A-PGAM subfamily.

It carries out the reaction (2R)-2-phosphoglycerate = (2R)-3-phosphoglycerate. The protein operates within carbohydrate degradation; glycolysis; pyruvate from D-glyceraldehyde 3-phosphate: step 3/5. Functionally, catalyzes the interconversion of 2-phosphoglycerate and 3-phosphoglycerate. The chain is 2,3-bisphosphoglycerate-independent phosphoglycerate mutase from Thermoplasma acidophilum (strain ATCC 25905 / DSM 1728 / JCM 9062 / NBRC 15155 / AMRC-C165).